Consider the following 332-residue polypeptide: MSTQSGIVAEQALLHSLNENLSADGIVIIIAKISPDSTSVHQTQVARSFEELVQLASQEREPLYIFYKPEGLDKYFFVSFIPDGSPVRSRMLYASTKNTLARQVGSNSLSTEQPLITDAQDLVDLKNFDSARPAGQNKPLTHDEEMQIEINKQQALLRKNTSVKLVSQDSASPLSLTFRVNSEKPINEILDSEGKNLIIFQIDPSNETIQIVQSDTCPSVDELYIDLPGPSYTIFRQGDSSFFIYSCPSGSKVKDRMIYASNKNGFINYLKNDQKIAFSKVVEIGDFVELDKSLLMATNKEDSLDHGSNPDLPNKSNLKFNKPKGPLRKRRT.

Positions 5–132 (SGIVAEQALL…VDLKNFDSAR (128 aa)) constitute an ADF-H 1 domain. Serine 167 and serine 172 each carry phosphoserine. Residues 173 to 300 (PLSLTFRVNS…DKSLLMATNK (128 aa)) enclose the ADF-H 2 domain. The disordered stretch occupies residues 301–332 (EDSLDHGSNPDLPNKSNLKFNKPKGPLRKRRT). Residues 321–332 (NKPKGPLRKRRT) are compositionally biased toward basic residues.

The protein belongs to the actin-binding proteins ADF family. Twinfilin subfamily. As to quaternary structure, interacts with G-actin; ADP-actin form.

It is found in the cytoplasm. The protein localises to the cytoskeleton. In terms of biological role, actin-binding protein involved in motile and morphological processes. Inhibits actin polymerization, likely by sequestering G-actin. Prevents actin filament assembly by forming a 1:1 complex with actin monomers, and inhibits the nucleotide exchange reaction of actin monomers. This chain is Twinfilin-1 (TWF1), found in Saccharomyces cerevisiae (strain ATCC 204508 / S288c) (Baker's yeast).